Here is a 461-residue protein sequence, read N- to C-terminus: Ornithine decarboxylase (461 aa).

At Lys-69 the chain carries N6-(pyridoxal phosphate)lysine. Pyridoxal 5'-phosphate-binding positions include Ser-200, Gly-237, and 274–277 (EPGR). At Ser-303 the chain carries Phosphoserine; by CK2. Residue 331–332 (YD) participates in substrate binding. The Proton donor; shared with dimeric partner role is filled by Cys-360. Position 360 is an S-nitrosocysteine (Cys-360). Asp-361 is a binding site for substrate. Tyr-389 serves as a coordination point for pyridoxal 5'-phosphate.

Belongs to the Orn/Lys/Arg decarboxylase class-II family. Homodimer. Only the dimer is catalytically active, as the active sites are constructed of residues from both monomers. It depends on pyridoxal 5'-phosphate as a cofactor.

The catalysed reaction is L-ornithine + H(+) = putrescine + CO2. Its pathway is amine and polyamine biosynthesis; putrescine biosynthesis via L-ornithine pathway; putrescine from L-ornithine: step 1/1. With respect to regulation, inhibited by antizymes (AZs) OAZ1, OAZ2 and OAZ3 in response to polyamine levels. AZs inhibit the assembly of the functional homodimer by binding to ODC monomers. Additionally, OAZ1 targets ODC monomers for ubiquitin-independent proteolytic destruction by the 26S proteasome. Functionally, catalyzes the first and rate-limiting step of polyamine biosynthesis that converts ornithine into putrescine, which is the precursor for the polyamines, spermidine and spermine. Polyamines are essential for cell proliferation and are implicated in cellular processes, ranging from DNA replication to apoptosis. This is Ornithine decarboxylase (ODC1) from Bos taurus (Bovine).